Here is a 35-residue protein sequence, read N- to C-terminus: Photosystem II reaction center protein M (35 aa).

Residues 7–27 (GFIASILFVLVPTVFLLILFI) traverse the membrane as a helical segment.

The protein belongs to the PsbM family. In terms of assembly, PSII is composed of 1 copy each of membrane proteins PsbA, PsbB, PsbC, PsbD, PsbE, PsbF, PsbH, PsbI, PsbJ, PsbK, PsbL, PsbM, PsbT, PsbX, PsbY, PsbZ, Psb30/Ycf12, peripheral proteins PsbO, CyanoQ (PsbQ), PsbU, PsbV and a large number of cofactors. It forms dimeric complexes.

The protein localises to the cellular thylakoid membrane. In terms of biological role, one of the components of the core complex of photosystem II (PSII). PSII is a light-driven water:plastoquinone oxidoreductase that uses light energy to abstract electrons from H(2)O, generating O(2) and a proton gradient subsequently used for ATP formation. It consists of a core antenna complex that captures photons, and an electron transfer chain that converts photonic excitation into a charge separation. This subunit is found at the monomer-monomer interface. The chain is Photosystem II reaction center protein M from Microcystis aeruginosa (strain NIES-843 / IAM M-2473).